Consider the following 990-residue polypeptide: MSVTNSNRKRSLSEVSEGSDPEAPAKTRNSYTTDEIVMVEEVDSEIPVNISSYGDAETYLKWQNTIAKVVKSVVSIHFSQVAPFDSDNAVVSQATGFVVDASLGIILTNRHVVGPGPFVGYAVFDNHEECDVTPIYRDPVHDFGFLKFDPTKIKYMNIQALELKPSLAKVGSEIRVVGNDAGEKLSILSGFISRLDRNAPDYGELTYNDFNTEYIQAAAAASGGSSGSPVVNSDGYAVALQAGGSTEASTDFFLPLDRILRALKCLQSNKPITRGTIQLQWLLKPFDECRRLGLTADRESQARAQFPDKIGLLVAETILREGPSDIKIKEGDTLISINGELISSFIQVDDILDESIGKEIEIIIQRGGIEHTVKCEVGDLHSITPDRYVEVCGATFHELSYQMARFYGMPVRGVFISSASGSFNIDANERVGWIVDSIDNKETPNLDTFIEVMKTIPDRQRVTLRYHHLTDQHTIHVTSIYIDRHWCSEFRLYKRNDVTGIWDYENVAEPIKAEELKPHAAKFIDIPIDIPEIATLSHSLCMVSTVSAIPLDSLPVENVKTSGLVIDAEQGYIIVSRRAVPHDCLDVFVTFADSVMIPASIVFLHPTKNYAIIKYDINLVNANIITPKLSNTPMKRGDRTRFIGFTHNNRLVTSETSVTDISSISIPSNIIPRYRATNLEAISIDCNVSTKCNSGILTDNDGTIRALWLSFLGERQDNKDKIYLMSLDITDCKEVIELLKEGKKPKVSIIDAGFGAISILTARIRGVPEEWIKKMELQSENRLQFISVSRVSFTEEPVKLQTGDVILAVNDKLVTEMSQLDGVVSTADDEESQTLRFKVVREGKIIDLNIKTIYVKETSQIAVFSGSILQPPHHAVWQSMMNIPSGVYCTFRGESSPALQFGISATNFITHVNETETPDLDTFLKVIKQIPDNTYCKMRLMTFDNVPFAISLKTNYHYFPTTELKKNIESGKWIENELNKTEEKKIIKSD.

Positions methionine 1 to threonine 32 are disordered. A serine protease region spans residues valine 73–leucine 263. Residues histidine 111, aspartate 142, and serine 225 each act as charge relay system in the active site. PDZ domains lie at arginine 290–glycine 368 and serine 758–glycine 843.

This sequence belongs to the peptidase S1C family.

The protein localises to the nucleus. Functionally, nuclear serine protease which mediates apoptosis. This chain is Pro-apoptotic serine protease NMA111 (NMA111), found in Vanderwaltozyma polyspora (strain ATCC 22028 / DSM 70294 / BCRC 21397 / CBS 2163 / NBRC 10782 / NRRL Y-8283 / UCD 57-17) (Kluyveromyces polysporus).